We begin with the raw amino-acid sequence, 459 residues long: Cysteine--tRNA ligase (459 aa).

Cysteine 28 contributes to the Zn(2+) binding site. The 'HIGH' region motif lies at 30 to 40; it reads VTIYDLCHIGH. Cysteine 209, histidine 234, and glutamate 238 together coordinate Zn(2+). The 'KMSKS' region signature appears at 266-270; that stretch reads KMSKS. Lysine 269 is a binding site for ATP.

It belongs to the class-I aminoacyl-tRNA synthetase family. In terms of assembly, monomer. Zn(2+) serves as cofactor.

Its subcellular location is the cytoplasm. It carries out the reaction tRNA(Cys) + L-cysteine + ATP = L-cysteinyl-tRNA(Cys) + AMP + diphosphate. This chain is Cysteine--tRNA ligase, found in Shewanella baltica (strain OS155 / ATCC BAA-1091).